The sequence spans 95 residues: Co-chaperonin GroES (95 aa).

It belongs to the GroES chaperonin family. Heptamer of 7 subunits arranged in a ring. Interacts with the chaperonin GroEL.

Its subcellular location is the cytoplasm. In terms of biological role, together with the chaperonin GroEL, plays an essential role in assisting protein folding. The GroEL-GroES system forms a nano-cage that allows encapsulation of the non-native substrate proteins and provides a physical environment optimized to promote and accelerate protein folding. GroES binds to the apical surface of the GroEL ring, thereby capping the opening of the GroEL channel. This chain is Co-chaperonin GroES, found in Maricaulis maris (strain MCS10) (Caulobacter maris).